The primary structure comprises 349 residues: Magnesium-protoporphyrin IX monomethyl ester [oxidative] cyclase (349 aa).

Residues 1 to 22 form a disordered region; it reads MTATASASSVSGSLGRNELPPH.

It belongs to the AcsF family. Requires Fe cation as cofactor.

It catalyses the reaction Mg-protoporphyrin IX 13-monomethyl ester + 3 NADPH + 3 O2 + 2 H(+) = 3,8-divinyl protochlorophyllide a + 3 NADP(+) + 5 H2O. The protein operates within porphyrin-containing compound metabolism; chlorophyll biosynthesis (light-independent). Its function is as follows. Catalyzes the formation of the isocyclic ring in chlorophyll biosynthesis. Mediates the cyclase reaction, which results in the formation of divinylprotochlorophyllide (Pchlide) characteristic of all chlorophylls from magnesium-protoporphyrin IX 13-monomethyl ester (MgPMME). In Prochlorococcus marinus (strain MIT 9211), this protein is Magnesium-protoporphyrin IX monomethyl ester [oxidative] cyclase.